Consider the following 509-residue polypeptide: ATP synthase subunit alpha (509 aa).

Position 169 to 176 (169 to 176) interacts with ATP; sequence GDRQTGKT.

The protein belongs to the ATPase alpha/beta chains family. F-type ATPases have 2 components, CF(1) - the catalytic core - and CF(0) - the membrane proton channel. CF(1) has five subunits: alpha(3), beta(3), gamma(1), delta(1), epsilon(1). CF(0) has three main subunits: a(1), b(2) and c(9-12). The alpha and beta chains form an alternating ring which encloses part of the gamma chain. CF(1) is attached to CF(0) by a central stalk formed by the gamma and epsilon chains, while a peripheral stalk is formed by the delta and b chains.

It is found in the cell inner membrane. It catalyses the reaction ATP + H2O + 4 H(+)(in) = ADP + phosphate + 5 H(+)(out). Functionally, produces ATP from ADP in the presence of a proton gradient across the membrane. The alpha chain is a regulatory subunit. This Sinorhizobium medicae (strain WSM419) (Ensifer medicae) protein is ATP synthase subunit alpha.